A 346-amino-acid chain; its full sequence is Phosphoribosylformylglycinamidine cyclo-ligase (346 aa).

Belongs to the AIR synthase family.

It localises to the cytoplasm. The enzyme catalyses 2-formamido-N(1)-(5-O-phospho-beta-D-ribosyl)acetamidine + ATP = 5-amino-1-(5-phospho-beta-D-ribosyl)imidazole + ADP + phosphate + H(+). It participates in purine metabolism; IMP biosynthesis via de novo pathway; 5-amino-1-(5-phospho-D-ribosyl)imidazole from N(2)-formyl-N(1)-(5-phospho-D-ribosyl)glycinamide: step 2/2. The polypeptide is Phosphoribosylformylglycinamidine cyclo-ligase (Proteus mirabilis (strain HI4320)).